We begin with the raw amino-acid sequence, 648 residues long: UDP-galactose:fucoside alpha-3-galactosyltransferase (648 aa).

WD repeat units follow at residues 320-358, 372-420, 422-461, 464-505, 507-546, 556-595, and 617-648; these read NHTD…GNDT, HKRG…IQTF, GHTG…FKRV, GHNG…NIIK, NQGG…NFND, NENS…NNNN, and HLNS…SWDL.

Belongs to the glycosyltransferase 77 family. Mn(2+) serves as cofactor.

Its subcellular location is the cytoplasm. It carries out the reaction an alpha-L-fucosyl-(1-&gt;2)-beta-D-galactosyl derivative + UDP-alpha-D-galactose = an alpha-D-galactosyl-(1-&gt;3)-[alpha-L-fucosyl-(1-&gt;2)]-beta-D-galactosyl derivative + UDP + H(+). It participates in protein modification; protein glycosylation. Stimulated by dithiothreitol (DTT) in vitro. Totally inhibited by EDTA. Specifically catalyzes the transfer of a galactosyl residue to the hydroxyproline-linked saccharide on Skp1 protein (fpaA/fpaB). Catalyzes the formation of a Gal-alpha-1,3-Fuc linkage, leading to Gal-Fuc-Gal-GlcNAc-HyPro143-Skp1. The protein is UDP-galactose:fucoside alpha-3-galactosyltransferase (agtA) of Dictyostelium discoideum (Social amoeba).